The primary structure comprises 320 residues: Beta-ketoacyl-[acyl-carrier-protein] synthase III (320 aa).

Catalysis depends on residues cysteine 114 and histidine 247. An ACP-binding region spans residues 248–252 (QANRR). The active site involves asparagine 277.

The protein belongs to the thiolase-like superfamily. FabH family. As to quaternary structure, homodimer.

The protein resides in the cytoplasm. The catalysed reaction is malonyl-[ACP] + acetyl-CoA + H(+) = 3-oxobutanoyl-[ACP] + CO2 + CoA. It functions in the pathway lipid metabolism; fatty acid biosynthesis. Functionally, catalyzes the condensation reaction of fatty acid synthesis by the addition to an acyl acceptor of two carbons from malonyl-ACP. Catalyzes the first condensation reaction which initiates fatty acid synthesis and may therefore play a role in governing the total rate of fatty acid production. Possesses both acetoacetyl-ACP synthase and acetyl transacylase activities. Its substrate specificity determines the biosynthesis of branched-chain and/or straight-chain of fatty acids. In Neisseria meningitidis serogroup C (strain 053442), this protein is Beta-ketoacyl-[acyl-carrier-protein] synthase III.